Here is a 249-residue protein sequence, read N- to C-terminus: Flagellar basal-body rod protein FlgF (249 aa).

The protein belongs to the flagella basal body rod proteins family. The basal body constitutes a major portion of the flagellar organelle and consists of five rings (E,L,P,S, and M) mounted on a central rod. The rod consists of about 26 subunits of FlgG in the distal portion, and FlgB, FlgC and FlgF are thought to build up the proximal portion of the rod with about 6 subunits each.

The protein localises to the bacterial flagellum basal body. The polypeptide is Flagellar basal-body rod protein FlgF (flgF) (Buchnera aphidicola subsp. Schizaphis graminum (strain Sg)).